The chain runs to 478 residues: Lactate utilization protein B (478 aa).

4Fe-4S ferredoxin-type domains are found at residues 303–333 and 352–381; these read GTEFQSALHCIRCAACINVCPVYRHVGGHAY and YDDHKELPYASSLCAACTEACPVKIPLHEQ. Residues Cys312, Cys315, Cys318, Cys322, Cys365, Cys368, and Cys372 each coordinate [4Fe-4S] cluster.

It belongs to the LutB/YkgF family.

Functionally, is involved in L-lactate degradation and allows cells to grow with lactate as the sole carbon source. Has probably a role as an electron transporter during oxidation of L-lactate. This is Lactate utilization protein B from Oceanobacillus iheyensis (strain DSM 14371 / CIP 107618 / JCM 11309 / KCTC 3954 / HTE831).